Reading from the N-terminus, the 77-residue chain is Putative antitoxin VapB3 (77 aa).

The protein belongs to the UPF0330 family.

Its function is as follows. Possibly the antitoxin component of a type II toxin-antitoxin (TA) system. Its cognate toxin is VapC3 (Potential). This Methanocaldococcus jannaschii (strain ATCC 43067 / DSM 2661 / JAL-1 / JCM 10045 / NBRC 100440) (Methanococcus jannaschii) protein is Putative antitoxin VapB3 (vapB3).